Consider the following 308-residue polypeptide: ADP,ATP carrier protein (308 aa).

Solcar repeat units lie at residues 6–99, 110–203, and 211–297; these read KNFM…FKRM, KWFA…LKPV, and NNFL…LQVI. The next 5 helical transmembrane spans lie at 8–35, 76–100, 108–128, 179–200, and 214–234; these read FMVDFLAGGLSAAVSKTAAAPIERVKLL, TANVIRYFPTQALNFAFKDKFKRMF, YWKWFAGNMASGGAAGAVSLS, FNISCVGIVVYRGLYFGMYDSL, and LAAFLLGWGITIGAGLASYPI. ADP is bound by residues Arg81 and Lys93. Residue Arg238 participates in ADP binding. The tract at residues 238-243 is important for transport activity; sequence RRRMMM. The Nucleotide carrier signature motif signature appears at 238–243; the sequence is RRRMMM. A helical membrane pass occupies residues 274–294; sequence AGANILRAVAGAGVLAGYDQL.

Belongs to the mitochondrial carrier (TC 2.A.29) family. Monomer.

It localises to the mitochondrion inner membrane. The enzyme catalyses ADP(in) + ATP(out) = ADP(out) + ATP(in). With respect to regulation, the matrix-open state (m-state) is inhibited by the membrane-permeable bongkrekic acid (BKA). The cytoplasmic-open state (c-state) is inhibited by the membrane-impermeable toxic inhibitor carboxyatractyloside (CATR). ADP:ATP antiporter that mediates import of ADP into the mitochondrial matrix for ATP synthesis, and export of ATP out to fuel the cell. Cycles between the cytoplasmic-open state (c-state) and the matrix-open state (m-state): operates by the alternating access mechanism with a single substrate-binding site intermittently exposed to either the cytosolic (c-state) or matrix (m-state) side of the inner mitochondrial membrane. The sequence is that of ADP,ATP carrier protein (ABT) from Chlamydomonas reinhardtii (Chlamydomonas smithii).